Reading from the N-terminus, the 309-residue chain is tRNA pseudouridine synthase B (309 aa).

Asp51 functions as the Nucleophile in the catalytic mechanism.

It belongs to the pseudouridine synthase TruB family. Type 1 subfamily.

The enzyme catalyses uridine(55) in tRNA = pseudouridine(55) in tRNA. Its function is as follows. Responsible for synthesis of pseudouridine from uracil-55 in the psi GC loop of transfer RNAs. The chain is tRNA pseudouridine synthase B from Coxiella burnetii (strain RSA 493 / Nine Mile phase I).